The following is a 112-amino-acid chain: UPF0060 membrane protein XOO1694 (112 aa).

Transmembrane regions (helical) follow at residues 8–28 (LLLF…PYLW), 32–52 (GGSV…VWLL), 62–82 (VYAA…LWWV), and 92–112 (LLGA…PRSA).

It belongs to the UPF0060 family.

The protein localises to the cell inner membrane. The sequence is that of UPF0060 membrane protein XOO1694 from Xanthomonas oryzae pv. oryzae (strain MAFF 311018).